Here is a 250-residue protein sequence, read N- to C-terminus: Proteasome subunit alpha (250 aa).

Belongs to the peptidase T1A family. The 20S proteasome core is composed of 14 alpha and 14 beta subunits that assemble into four stacked heptameric rings, resulting in a barrel-shaped structure. The two inner rings, each composed of seven catalytic beta subunits, are sandwiched by two outer rings, each composed of seven alpha subunits. The catalytic chamber with the active sites is on the inside of the barrel. Has a gated structure, the ends of the cylinder being occluded by the N-termini of the alpha-subunits. Is capped by the proteasome-associated ATPase, ARC.

It is found in the cytoplasm. The protein operates within protein degradation; proteasomal Pup-dependent pathway. The formation of the proteasomal ATPase ARC-20S proteasome complex, likely via the docking of the C-termini of ARC into the intersubunit pockets in the alpha-rings, may trigger opening of the gate for substrate entry. Interconversion between the open-gate and close-gate conformations leads to a dynamic regulation of the 20S proteasome proteolysis activity. In terms of biological role, component of the proteasome core, a large protease complex with broad specificity involved in protein degradation. The protein is Proteasome subunit alpha of Mycobacterium sp. (strain JLS).